We begin with the raw amino-acid sequence, 180 residues long: ATP synthase subunit b 2 (180 aa).

Residues 33–53 (IFWLLVTLVAIYFLLTRVALP) form a helical membrane-spanning segment.

The protein belongs to the ATPase B chain family. In terms of assembly, F-type ATPases have 2 components, F(1) - the catalytic core - and F(0) - the membrane proton channel. F(1) has five subunits: alpha(3), beta(3), gamma(1), delta(1), epsilon(1). F(0) has three main subunits: a(1), b(2) and c(10-14). The alpha and beta chains form an alternating ring which encloses part of the gamma chain. F(1) is attached to F(0) by a central stalk formed by the gamma and epsilon chains, while a peripheral stalk is formed by the delta and b chains.

Its subcellular location is the cell inner membrane. Functionally, f(1)F(0) ATP synthase produces ATP from ADP in the presence of a proton or sodium gradient. F-type ATPases consist of two structural domains, F(1) containing the extramembraneous catalytic core and F(0) containing the membrane proton channel, linked together by a central stalk and a peripheral stalk. During catalysis, ATP synthesis in the catalytic domain of F(1) is coupled via a rotary mechanism of the central stalk subunits to proton translocation. Component of the F(0) channel, it forms part of the peripheral stalk, linking F(1) to F(0). The b'-subunit is a diverged and duplicated form of b found in plants and photosynthetic bacteria. In Cereibacter sphaeroides (strain ATCC 17029 / ATH 2.4.9) (Rhodobacter sphaeroides), this protein is ATP synthase subunit b 2 (atpF2).